A 1794-amino-acid polypeptide reads, in one-letter code: Non-reducing polyketide synthase nscA (1794 aa).

The tract at residues 19–256 (DLKDLFRRLH…PLPVYDGLCH (238 aa)) is N-terminal acylcarrier protein transacylase domain (SAT). The Ketosynthase family 3 (KS3) domain occupies 389–822 (ASKLAIVGMA…GGNTTVLLED (434 aa)). The disordered stretch occupies residues 427 to 448 (PDRFDLNTHYDPTGKTENATQT). Basic and acidic residues predominate over residues 428–440 (DRFDLNTHYDPTG). Residues Cys562, His697, and His740 each act as for beta-ketoacyl synthase activity in the active site. The tract at residues 928–1249 (FTGQGAYYSG…LVTLHLAGLT (322 aa)) is malonyl-CoA:ACP transacylase (MAT) domain. The tract at residues 1314 to 1633 (TSLVHQITAE…RLLMDRFFSP (320 aa)) is product template (PT) domain. Residues 1318 to 1454 (HQITAETVEA…GVVRFEDPAA (137 aa)) are N-terminal hotdog fold. Positions 1318-1628 (HQITAETVEA…FRRVPRLLMD (311 aa)) constitute a PKS/mFAS DH domain. Residue His1350 is the Proton acceptor; for dehydratase activity of the active site. The interval 1482–1628 (ASKLSKPLAY…FRRVPRLLMD (147 aa)) is C-terminal hotdog fold. The Proton donor; for dehydratase activity role is filled by Asp1539. Disordered regions lie at residues 1637 to 1665 (SHAEKQLQETAPSATSVKKSTPPAAEAPA) and 1682 to 1718 (ASKSEVSTPPLTPPSQQESPGESAVITPATSDRGDPV). Polar residues-rich tracts occupy residues 1644–1655 (QETAPSATSVKK) and 1685–1701 (SEVSTPPLTPPSQQESP). One can recognise a Carrier domain in the interval 1717–1794 (PVDAGVVGQC…EMTAWLEEYC (78 aa)). The residue at position 1754 (Ser1754) is an O-(pantetheine 4'-phosphoryl)serine.

The cofactor is pantetheine 4'-phosphate.

It functions in the pathway secondary metabolite biosynthesis. Non-reducing polyketide synthase; part of the gene cluster that mediates the biosynthesis of neosartoricin, a prenylated anthracenone that exhibits T-cell antiproliferative activity, suggestive of a physiological role as an immunosuppressive agent. The non-reducing polyketide synthase nscA probably synthesizes and cyclizes the decaketide backbone. The hydrolase nscB then mediates the product release through hydrolysis followed by spontaneous decarboxylation. The prenyltransferase nscD catalyzes the addition of the dimethylallyl group to the aromatic C5. The FAD-dependent monooxygenase nscC is then responsible for the stereospecific hydroxylation at C2. There is no gene encoding O-acetyltransferase in the nsc gene cluster; thus, the last step of 2-O-acetylation leading to neosartoricin may be catalyzed by an unidentified O-acetyltransferase. This Neosartorya fischeri (strain ATCC 1020 / DSM 3700 / CBS 544.65 / FGSC A1164 / JCM 1740 / NRRL 181 / WB 181) (Aspergillus fischerianus) protein is Non-reducing polyketide synthase nscA.